The sequence spans 274 residues: 3-methyl-2-oxobutanoate hydroxymethyltransferase (274 aa).

Mg(2+) is bound by residues Asp-49 and Asp-88. Residues Asp-49 to Ser-50, Asp-88, and Lys-118 each bind 3-methyl-2-oxobutanoate. Position 120 (Glu-120) interacts with Mg(2+). The active-site Proton acceptor is Glu-187.

It belongs to the PanB family. Homodecamer; pentamer of dimers. Mg(2+) serves as cofactor.

It localises to the cytoplasm. It carries out the reaction 3-methyl-2-oxobutanoate + (6R)-5,10-methylene-5,6,7,8-tetrahydrofolate + H2O = 2-dehydropantoate + (6S)-5,6,7,8-tetrahydrofolate. Its pathway is cofactor biosynthesis; (R)-pantothenate biosynthesis; (R)-pantoate from 3-methyl-2-oxobutanoate: step 1/2. Functionally, catalyzes the reversible reaction in which hydroxymethyl group from 5,10-methylenetetrahydrofolate is transferred onto alpha-ketoisovalerate to form ketopantoate. This Rhodopseudomonas palustris (strain HaA2) protein is 3-methyl-2-oxobutanoate hydroxymethyltransferase.